The chain runs to 112 residues: Histone H2A, sperm (112 aa).

Q91 is subject to N5-methylglutamine. Residue K106 forms a Glycyl lysine isopeptide (Lys-Gly) (interchain with G-Cter in ubiquitin) linkage.

This sequence belongs to the histone H2A family. The nucleosome is a histone octamer containing two molecules each of H2A, H2B, H3 and H4 assembled in one H3-H4 heterotetramer and two H2A-H2B heterodimers. The octamer wraps approximately 147 bp of DNA. In terms of processing, monoubiquitination gives a specific tag for epigenetic transcriptional repression.

The protein resides in the nucleus. It localises to the chromosome. In terms of biological role, core component of nucleosome. Nucleosomes wrap and compact DNA into chromatin, limiting DNA accessibility to the cellular machineries which require DNA as a template. Histones thereby play a central role in transcription regulation, DNA repair, DNA replication and chromosomal stability. DNA accessibility is regulated via a complex set of post-translational modifications of histones, also called histone code, and nucleosome remodeling. The sequence is that of Histone H2A, sperm from Lytechinus pictus (Painted sea urchin).